A 75-amino-acid chain; its full sequence is uncharacterized protein (75 aa).

This is an uncharacterized protein from Dryophytes versicolor (chameleon treefrog).